Here is a 389-residue protein sequence, read N- to C-terminus: MTVLTEGIAPHGGQLINRIATAAEKAEFLALAEKLPRVSLDERALSDLVMIAIGGFSPLKGFMEQDDYEKVVDDMRLINGLPWAIPVTLSVREEVADPLKEGNWIRLDDSEGNFVGVLELTQKYRYNKAHEAVNVYRTDDQKHPGVKVLYEQGEINLAGPIWLLQRDPHPQFPKYQIDPLQSRKMFHEKAWKTIVGFQTRNPIHRAHEYIQKCALEVVDGLFLHPLVGATKSDDVPADVRMRCYEIMMDKYFPQDRVILAINPSAMRYAGPREAIFHAIIRKNYGCTHFIVGRDHAGVGDYYGTYDAQYIFDEFEPGELGIVPMKFEHAFYCTRTSGMATTKTSPSLPEERIHLSGTKVRELLRKGELPPPEFSRPEVAAELIRAMQGS.

Belongs to the sulfate adenylyltransferase family.

It carries out the reaction sulfate + ATP + H(+) = adenosine 5'-phosphosulfate + diphosphate. The protein operates within sulfur metabolism; hydrogen sulfide biosynthesis; sulfite from sulfate: step 1/3. In Microcystis aeruginosa (strain NIES-843 / IAM M-2473), this protein is Sulfate adenylyltransferase.